Consider the following 93-residue polypeptide: Small ribosomal subunit protein bS20 (93 aa).

This sequence belongs to the bacterial ribosomal protein bS20 family.

Functionally, binds directly to 16S ribosomal RNA. The polypeptide is Small ribosomal subunit protein bS20 (Dictyoglomus turgidum (strain DSM 6724 / Z-1310)).